A 417-amino-acid polypeptide reads, in one-letter code: Serpin A9 (417 aa).

The first 23 residues, 1–23, serve as a signal peptide directing secretion; sequence MASYLYGVLFAVGLCAPIYCVSP. 2 N-linked (GlcNAc...) asparagine glycosylation sites follow: asparagine 101 and asparagine 390.

This sequence belongs to the serpin family. In terms of tissue distribution, highly expressed in normal germinal center (GC) B-cells and GC B-cell-derived malignancies.

It is found in the secreted. The protein resides in the cytoplasm. It localises to the membrane. Functionally, protease inhibitor that inhibits trypsin and trypsin-like serine proteases (in vitro). Inhibits plasmin and thrombin with lower efficiency (in vitro). The protein is Serpin A9 (SERPINA9) of Homo sapiens (Human).